A 329-amino-acid polypeptide reads, in one-letter code: Cytosolic arginine sensor for mTORC1 subunit 1 (329 aa).

A Phosphoserine; by PKB/AKT1 modification is found at S14. ACT domains lie at 72–138 and 260–321; these read AEAT…HTLA and GELW…EVLQ. Residues 111-112, G274, 280-281, and 300-304 each bind L-arginine; these read SV, IV, and TFNFD.

The protein belongs to the GATS family. As to quaternary structure, forms homodimers and heterodimers with CASTOR2. Interacts with the GATOR2 complex which is composed of MIOS, SEC13, SEH1L, WDR24 and WDR59; the interaction is negatively regulated by arginine. Interacts with TM4SF5; the interaction is positively regulated by leucine and is negatively regulated by arginine. Phosphorylation at Ser-14 by AKT1, promoting the interaction between CASTOR1 and RNF167. Post-translationally, ubiquitinated by RNF167 via 'Lys-29'-polyubiquitination, leading to its degradation, releasing the GATOR2 complex. Ubiquitination by RNF167 is promoted by phosphorylation at Ser-14 by AKT1. As to expression, widely expressed.

Its subcellular location is the cytoplasm. The protein resides in the cytosol. Functionally, functions as an intracellular arginine sensor within the amino acid-sensing branch of the TORC1 signaling pathway. As a homodimer or a heterodimer with CASTOR2, binds and inhibits the GATOR subcomplex GATOR2 and thereby mTORC1. Binding of arginine to CASTOR1 allosterically disrupts the interaction of CASTOR1-containing dimers with GATOR2 which can in turn activate mTORC1 and the TORC1 signaling pathway. In Homo sapiens (Human), this protein is Cytosolic arginine sensor for mTORC1 subunit 1.